A 208-amino-acid polypeptide reads, in one-letter code: FMRFamide-like neuropeptide 18 (208 aa).

The first 21 residues, 1–21 (MQRWSGVLLISLCCLLRGALA), serve as a signal peptide directing secretion. Residues 22–83 (YTEPIYEIVE…VWEKRESSVQ (62 aa)) constitute a propeptide that is removed on maturation. F93 bears the Phenylalanine amide mark. A propeptide spanning residues 97–101 (AYFDE) is cleaved from the precursor. F111 is modified (phenylalanine amide). Positions 115–119 (SYFDE) are excised as a propeptide. At F129 the chain carries Phenylalanine amide. The propeptide occupies 133–137 (DVPMD). F147 carries the post-translational modification Phenylalanine amide. The propeptide occupies 151–158 (DYMADSFD). A phenylalanine amide mark is found at F169 and F180. The propeptide occupies 184–195 (SDLEEHYAGVLL). Residue F205 is modified to Phenylalanine amide.

It belongs to the FARP (FMRFamide related peptide) family. Post-translationally, may be processed by convertase egl-3. As to expression, expressed in head neurons and weakly in ventral nerve cord. Expressed in the interneurons AVA, AIY and RIG, the motor neuron RIM and the pharyngeal neurons M2 and M3. EMPGVLRF-amide: Expressed in cholinergic pharyngeal motoneurons M2 and M3.

It localises to the secreted. In terms of biological role, FMRFamide-like neuropeptides. Ligand to G-protein coupled receptor npr-1. Involved in modulating locomotion quiescence during the sleep-like state called lethargus which occurs during molting between larval and adult stages, acting via npr-1. Together with flp-1, plays a homeostatic role by acting on the GABAergic neural transmission at neuromuscular junctions to prevent overexcitation of the locomotor circuit. Plays a role in the navigational capacity of sperm and the targeting of sperm derived from males to the fertilization site in the uterus of hermaphrodites. Its function is as follows. SVPGVLRF-amide: Excites muscle tension. Functionally, activates the G-protein coupled receptor npr-1 more effectively than other flp-18 peptides. Inhibits the activity of dissected pharyngeal myogenic muscle system. The polypeptide is FMRFamide-like neuropeptide 18 (Caenorhabditis elegans).